Consider the following 178-residue polypeptide: NADH-quinone oxidoreductase subunit I 2 (178 aa).

4Fe-4S ferredoxin-type domains lie at 46 to 78 (IVLT…MQAA) and 88 to 117 (AWFR…LTPF). The [4Fe-4S] cluster site is built by Cys-58, Cys-61, Cys-64, Cys-68, Cys-97, Cys-100, Cys-103, and Cys-107.

Belongs to the complex I 23 kDa subunit family. In terms of assembly, NDH-1 is composed of 14 different subunits. Subunits NuoA, H, J, K, L, M, N constitute the membrane sector of the complex. The cofactor is [4Fe-4S] cluster.

The protein resides in the cell inner membrane. The catalysed reaction is a quinone + NADH + 5 H(+)(in) = a quinol + NAD(+) + 4 H(+)(out). Its function is as follows. NDH-1 shuttles electrons from NADH, via FMN and iron-sulfur (Fe-S) centers, to quinones in the respiratory chain. The immediate electron acceptor for the enzyme in this species is believed to be ubiquinone. Couples the redox reaction to proton translocation (for every two electrons transferred, four hydrogen ions are translocated across the cytoplasmic membrane), and thus conserves the redox energy in a proton gradient. This is NADH-quinone oxidoreductase subunit I 2 from Syntrophobacter fumaroxidans (strain DSM 10017 / MPOB).